A 357-amino-acid polypeptide reads, in one-letter code: Protein phosphatase 1 regulatory subunit 42 (357 aa).

LRR repeat units follow at residues 29–50, 51–72, 73–94, 95–116, 117–138, 147–168, and 169–190; these read KITH…SLCK, NLSV…NYAT, NLTH…RSLK, KLEK…EGLG, ELRE…LFDP, SLSI…EILE, and NLNQ…EFLL. Residues 204–242 enclose the LRRCT domain; the sequence is NPVCLKPKYRDRLILVSKSLEFLDGKEIKNIERQFLMNW.

Interacts with PPP1CC isoform gamma-2; the interaction is direct. Interacts with actin, dynein, KIF5B, KIFC1 and tubulin. Associates with microtubules. Phosphorylated; in the testis.

It localises to the cytoplasm. Its subcellular location is the cytoskeleton. The protein localises to the microtubule organizing center. The protein resides in the centrosome. Its function is as follows. Regulates phosphatase activity of protein phosphatase 1 (PP1) complexes in the testis. The sequence is that of Protein phosphatase 1 regulatory subunit 42 (PPP1R42) from Macaca fascicularis (Crab-eating macaque).